The following is a 149-amino-acid chain: Large ribosomal subunit protein bL9 (149 aa).

This sequence belongs to the bacterial ribosomal protein bL9 family.

Binds to the 23S rRNA. This Enterobacter sp. (strain 638) protein is Large ribosomal subunit protein bL9.